The primary structure comprises 312 residues: HPr kinase/phosphorylase (312 aa).

Residues H139 and K160 contribute to the active site. Residue 154-161 (GDSGIGKS) coordinates ATP. S161 is a binding site for Mg(2+). Catalysis depends on D178, which acts as the Proton acceptor; for phosphorylation activity. Proton donor; for dephosphorylation activity. The interval 202 to 211 (IEIRGVGIID) is important for the catalytic mechanism of both phosphorylation and dephosphorylation. E203 is a Mg(2+) binding site. R244 is a catalytic residue. An important for the catalytic mechanism of dephosphorylation region spans residues 265 to 270 (PVKTGR).

The protein belongs to the HPrK/P family. As to quaternary structure, homohexamer. Requires Mg(2+) as cofactor.

The catalysed reaction is [HPr protein]-L-serine + ATP = [HPr protein]-O-phospho-L-serine + ADP + H(+). It catalyses the reaction [HPr protein]-O-phospho-L-serine + phosphate + H(+) = [HPr protein]-L-serine + diphosphate. Functionally, catalyzes the ATP- as well as the pyrophosphate-dependent phosphorylation of a specific serine residue in HPr, a phosphocarrier protein of the phosphoenolpyruvate-dependent sugar phosphotransferase system (PTS). HprK/P also catalyzes the pyrophosphate-producing, inorganic phosphate-dependent dephosphorylation (phosphorolysis) of seryl-phosphorylated HPr (P-Ser-HPr). The two antagonistic activities of HprK/P are regulated by several intracellular metabolites, which change their concentration in response to the absence or presence of rapidly metabolisable carbon sources (glucose, fructose, etc.) in the growth medium. Therefore, by controlling the phosphorylation state of HPr, HPrK/P is a sensor enzyme that plays a major role in the regulation of carbon metabolism and sugar transport: it mediates carbon catabolite repression (CCR), and regulates PTS-catalyzed carbohydrate uptake and inducer exclusion. This chain is HPr kinase/phosphorylase, found in Streptococcus pneumoniae serotype 4 (strain ATCC BAA-334 / TIGR4).